Reading from the N-terminus, the 339-residue chain is Phenylalanine--tRNA ligase alpha subunit (339 aa).

Glu250 provides a ligand contact to Mg(2+).

This sequence belongs to the class-II aminoacyl-tRNA synthetase family. Phe-tRNA synthetase alpha subunit type 1 subfamily. In terms of assembly, tetramer of two alpha and two beta subunits. The cofactor is Mg(2+).

It localises to the cytoplasm. It catalyses the reaction tRNA(Phe) + L-phenylalanine + ATP = L-phenylalanyl-tRNA(Phe) + AMP + diphosphate + H(+). This is Phenylalanine--tRNA ligase alpha subunit from Parabacteroides distasonis (strain ATCC 8503 / DSM 20701 / CIP 104284 / JCM 5825 / NCTC 11152).